The chain runs to 51 residues: Magnetosome protein Mms5 (51 aa).

At 1–12 (MLSAKGVSLGLG) the chain is on the lumenal side. An LG region region spans residues 9 to 16 (LGLGLGLG). A helical transmembrane segment spans residues 13–33 (LGLGAWGPVLLGVVGVAGAIA). At 34–51 (LYGYYKNRNAEPAAAEAV) the chain is on the cytoplasmic side.

Belongs to the magnetosome MamD/Mms5 family. Post-translationally, seen in gels as a band of about 5 kDa, with an N-terminus that corresponds to residue 8, suggesting it may undergo N-terminal cleavage.

It is found in the magnetosome membrane. In terms of biological role, might be involved in magnetite crystal growth. This Paramagnetospirillum magneticum (strain ATCC 700264 / AMB-1) (Magnetospirillum magneticum) protein is Magnetosome protein Mms5.